The chain runs to 138 residues: Large ribosomal subunit protein uL16 (138 aa).

Belongs to the universal ribosomal protein uL16 family. In terms of assembly, part of the 50S ribosomal subunit.

Its function is as follows. Binds 23S rRNA and is also seen to make contacts with the A and possibly P site tRNAs. The protein is Large ribosomal subunit protein uL16 of Chlamydia trachomatis serovar D (strain ATCC VR-885 / DSM 19411 / UW-3/Cx).